The following is a 173-amino-acid chain: FMN reductase (NADH) RutF 2 (173 aa).

It belongs to the non-flavoprotein flavin reductase family. RutF subfamily.

It catalyses the reaction FMNH2 + NAD(+) = FMN + NADH + 2 H(+). Its function is as follows. Catalyzes the reduction of FMN to FMNH2 which is used to reduce pyrimidine by RutA via the Rut pathway. The protein is FMN reductase (NADH) RutF 2 of Rhizobium rhizogenes (strain K84 / ATCC BAA-868) (Agrobacterium radiobacter).